The following is a 217-amino-acid chain: Probable transaldolase (217 aa).

The Schiff-base intermediate with substrate role is filled by K83.

It belongs to the transaldolase family. Type 3B subfamily.

It localises to the cytoplasm. It carries out the reaction D-sedoheptulose 7-phosphate + D-glyceraldehyde 3-phosphate = D-erythrose 4-phosphate + beta-D-fructose 6-phosphate. It participates in carbohydrate degradation; pentose phosphate pathway; D-glyceraldehyde 3-phosphate and beta-D-fructose 6-phosphate from D-ribose 5-phosphate and D-xylulose 5-phosphate (non-oxidative stage): step 2/3. Its function is as follows. Transaldolase is important for the balance of metabolites in the pentose-phosphate pathway. The polypeptide is Probable transaldolase (Clostridium botulinum (strain Okra / Type B1)).